A 204-amino-acid chain; its full sequence is Urease accessory protein UreG (204 aa).

A GTP-binding site is contributed by 12 to 19; sequence GPVGSGKT.

Belongs to the SIMIBI class G3E GTPase family. UreG subfamily. As to quaternary structure, homodimer. UreD, UreF and UreG form a complex that acts as a GTP-hydrolysis-dependent molecular chaperone, activating the urease apoprotein by helping to assemble the nickel containing metallocenter of UreC. The UreE protein probably delivers the nickel.

The protein resides in the cytoplasm. Its function is as follows. Facilitates the functional incorporation of the urease nickel metallocenter. This process requires GTP hydrolysis, probably effectuated by UreG. This is Urease accessory protein UreG from Pseudomonas aeruginosa (strain LESB58).